Here is a 515-residue protein sequence, read N- to C-terminus: Maturase K (515 aa).

Belongs to the intron maturase 2 family. MatK subfamily.

The protein localises to the plastid. Its subcellular location is the chloroplast. In terms of biological role, usually encoded in the trnK tRNA gene intron. Probably assists in splicing its own and other chloroplast group II introns. This is Maturase K from Helonias bullata (Swamp pink).